The primary structure comprises 905 residues: Autophagy-related protein 9 (905 aa).

Residues 1–227 (MSEYNQNSNN…NGMLNIVLTR (227 aa)) lie on the Cytoplasmic side of the membrane. The interval 55 to 132 (REEGNENTNN…TSIPKDPPKK (78 aa)) is disordered. Low complexity predominate over residues 60–84 (ENTNNDNTNLLDSESDSDSSSSLSS). Over residues 94–117 (GKEHNQNEDSTKVHWDTTRPHYGQ) the composition is skewed to basic and acidic residues. A helical transmembrane segment spans residues 228 to 248 (LVDLLILAFILSFTVFLKWGI). Residues 249–272 (NYDFFMSSSSDRASVTLKDLVIPN) lie on the Lumenal side of the membrane. A helical transmembrane segment spans residues 273 to 293 (FISEMVPVSVKLLLLGFSGYI). Over 294–463 (VLRLVQLYFD…KELSARFKMA (170 aa)) the chain is Cytoplasmic. An intramembrane segment occupies 464-484 (AIINLLLCPFIVIYFVLLYFF). The Cytoplasmic segment spans residues 485–549 (RYFNEYKSNP…PRGFWVINLM (65 aa)). Residues 550-570 (NFVNFVSGAITAILVLMGLWF) traverse the membrane as a helical segment. The Lumenal segment spans residues 571–588 (DNEEHNFWSFEITENKSS). The helical transmembrane segment at 589–609 (LFYISLFGTVWAITSSSLTST) threads the bilayer. At 610–665 (NSNTSENLNSQTSSFFYDPEASLRYVSQFTHYLPSSWNGRLHTVQVKNEFCELFSM) the chain is on the cytoplasmic side. An intramembrane segment occupies 666–686 (KIIIIINEILSLILTPFILWF). The Cytoplasmic segment spans residues 687-905 (KVSNSSGAII…NQFYKHDRNR (219 aa)). Disordered stretches follow at residues 731–795 (LNKS…DINN) and 821–851 (QASKLTSNEQLSTKPSRIAKPDNSQSVVGDP). The span at 733–755 (KSKKRKPRKSRANAKKKASSKSK) shows a compositional bias: basic residues. A compositionally biased stretch (polar residues) spans 823-835 (SKLTSNEQLSTKP).

The protein belongs to the ATG9 family. Homotrimer; forms a homotrimer with a central pore that forms a path between the two membrane leaflets. Phosphorylated by ATG1. ATG1 phosphorylation is required for preautophagosome elongation.

It localises to the preautophagosomal structure membrane. The protein resides in the cytoplasmic vesicle membrane. It is found in the golgi apparatus membrane. Its subcellular location is the endoplasmic reticulum membrane. The enzyme catalyses a 1,2-diacyl-sn-glycero-3-phosphocholine(in) = a 1,2-diacyl-sn-glycero-3-phosphocholine(out). It catalyses the reaction a 1,2-diacyl-sn-glycero-3-phospho-L-serine(in) = a 1,2-diacyl-sn-glycero-3-phospho-L-serine(out). The catalysed reaction is a 1,2-diacyl-sn-glycero-3-phosphoethanolamine(in) = a 1,2-diacyl-sn-glycero-3-phosphoethanolamine(out). It carries out the reaction a 1,2-diacyl-sn-glycero-3-phospho-(1D-myo-inositol-3-phosphate)(in) = a 1,2-diacyl-sn-glycero-3-phospho-(1D-myo-inositol-3-phosphate)(out). Its function is as follows. Phospholipid scramblase involved in autophagy and cytoplasm to vacuole transport (Cvt) vesicle formation. Cycles between the preautophagosomal structure/phagophore assembly site (PAS) and the cytoplasmic vesicle pool and supplies membrane for the growing autophagosome. Lipid scramblase activity plays a key role in preautophagosomal structure/phagophore assembly by distributing the phospholipids that arrive through ATG2 from the cytoplasmic to the luminal leaflet of the bilayer, thereby driving autophagosomal membrane expansion. Required for mitophagy. Also involved in endoplasmic reticulum-specific autophagic process and is essential for the survival of cells subjected to severe ER stress. Different machineries are required for anterograde trafficking to the PAS during either the Cvt pathway or bulk autophagy and for retrograde trafficking. This Debaryomyces hansenii (strain ATCC 36239 / CBS 767 / BCRC 21394 / JCM 1990 / NBRC 0083 / IGC 2968) (Yeast) protein is Autophagy-related protein 9 (ATG9).